Consider the following 401-residue polypeptide: Argininosuccinate synthase (401 aa).

9–17 (AYSGGLDTS) serves as a coordination point for ATP. Position 88 (Tyr-88) interacts with L-citrulline. Gly-118 lines the ATP pocket. Residues Thr-120, Asn-124, and Asp-125 each coordinate L-aspartate. Residue Asn-124 coordinates L-citrulline. Positions 128, 177, 186, 262, and 274 each coordinate L-citrulline.

This sequence belongs to the argininosuccinate synthase family. Type 1 subfamily. As to quaternary structure, homotetramer.

The protein localises to the cytoplasm. It carries out the reaction L-citrulline + L-aspartate + ATP = 2-(N(omega)-L-arginino)succinate + AMP + diphosphate + H(+). Its pathway is amino-acid biosynthesis; L-arginine biosynthesis; L-arginine from L-ornithine and carbamoyl phosphate: step 2/3. This Chlorobaculum parvum (strain DSM 263 / NCIMB 8327) (Chlorobium vibrioforme subsp. thiosulfatophilum) protein is Argininosuccinate synthase.